The following is a 201-amino-acid chain: MYEYIRGQFQGISKDYVVIELNNIGYRIFTSGNTMSNMPKVGDEVLLYLEQIVREDFIGLYGFTTKEELEMFKLLLSINGVGAKAALSLLSISTVNNLKYAIMMGDEKHITRAPGIGKKTAQRIILELKDKLKPDELTSEEEQLIEGINDNSDYSFNINETLSALMALGYTEKEAQKALEKVDKTLSIENMIKESLKLLMR.

Positions 1-64 (MYEYIRGQFQ…EDFIGLYGFT (64 aa)) are domain I. The segment at 65–143 (TKEELEMFKL…PDELTSEEEQ (79 aa)) is domain II. The segment at 144-152 (LIEGINDNS) is flexible linker. The domain III stretch occupies residues 153 to 201 (DYSFNINETLSALMALGYTEKEAQKALEKVDKTLSIENMIKESLKLLMR).

It belongs to the RuvA family. Homotetramer. Forms an RuvA(8)-RuvB(12)-Holliday junction (HJ) complex. HJ DNA is sandwiched between 2 RuvA tetramers; dsDNA enters through RuvA and exits via RuvB. An RuvB hexamer assembles on each DNA strand where it exits the tetramer. Each RuvB hexamer is contacted by two RuvA subunits (via domain III) on 2 adjacent RuvB subunits; this complex drives branch migration. In the full resolvosome a probable DNA-RuvA(4)-RuvB(12)-RuvC(2) complex forms which resolves the HJ.

The protein localises to the cytoplasm. The RuvA-RuvB-RuvC complex processes Holliday junction (HJ) DNA during genetic recombination and DNA repair, while the RuvA-RuvB complex plays an important role in the rescue of blocked DNA replication forks via replication fork reversal (RFR). RuvA specifically binds to HJ cruciform DNA, conferring on it an open structure. The RuvB hexamer acts as an ATP-dependent pump, pulling dsDNA into and through the RuvAB complex. HJ branch migration allows RuvC to scan DNA until it finds its consensus sequence, where it cleaves and resolves the cruciform DNA. The protein is Holliday junction branch migration complex subunit RuvA of Clostridium perfringens (strain SM101 / Type A).